The following is a 207-amino-acid chain: Protein Nef (207 aa).

Residue G2 is the site of N-myristoyl glycine; by host attachment. S6 bears the Phosphoserine; by host mark. The acidic; interacts with host PACS1 and PACS2; stabilizes the interaction of NEF/MHC-I with host AP1M1; necessary for MHC-I internalization stretch occupies residues 62–66 (EEEEE). Positions 70-79 (PVRPQVPLRP) are SH3-binding; interaction with Src family tyrosine kinases. The short motif at 73 to 76 (PQVP) is the PxxP; stabilizes the interaction of NEF/MHC-I with host AP1M1; necessary for MHC-I internalization element. Residues 109–125 (EILDLWVYNTQGYFPDW) form a mediates dimerization, Nef-PTE1 interaction region. The segment at 149-181 (VDPQDVEKANEGENNSLLHPMCQHGIEDPEREV) is binding to ATP6V1H. The Dileucine internalization motif; necessary for CD4 internalization motif lies at 165-166 (LL). The Diacidic; necessary for CD4 internalization motif lies at 175 to 176 (ED).

This sequence belongs to the lentivirus primate group Nef protein family. In terms of assembly, monomer; cytosolic form. Homodimer; membrane bound form. Interacts with Nef associated p21-activated kinase (PAK2); this interaction activates PAK2. Associates with the Nef-MHC-I-AP1 complex; this complex is required for MHC-I internalization. Interacts (via C-terminus) with host PI3-kinase. Interacts with host PACS1; this interaction seems to be weak. Interacts with host PACS2. Interacts with host LCK and MAPK3; these interactions inhibit the kinase activity of the latter. Interacts with host ATP6V1H; this interaction may play a role in CD4 endocytosis. Associates with the CD4-Nef-AP2 complex; this complex is required for CD4 internalization. Interacts with host AP2 subunit alpha and AP2 subunit sigma2. Interacts with TCR-zeta chain; this interaction up-regulates the Fas ligand (FasL) surface expression. Interacts with host HCK, LYN, and SRC; these interactions activate the Src family kinases. Interacts with MAP3K5; this interaction inhibits the Fas and TNFR-mediated death signals. Interacts with beta-COP and PTE1. Interacts with human RACK1; this increases Nef phosphorylation by PKC. Interacts with TP53; this interaction decreases the half-life of TP53, protecting the infected cell against p53-mediated apoptosis. Post-translationally, the virion-associated Nef proteins are cleaved by the viral protease to release the soluble C-terminal core protein. Nef is probably cleaved concomitantly with viral structural proteins on maturation of virus particles. In terms of processing, myristoylated. Phosphorylated on serine residues, probably by host PKCdelta and theta.

It is found in the host cell membrane. The protein localises to the virion. The protein resides in the secreted. It localises to the host Golgi apparatus membrane. Factor of infectivity and pathogenicity, required for optimal virus replication. Alters numerous pathways of T-lymphocyte function and down-regulates immunity surface molecules in order to evade host defense and increase viral infectivity. Alters the functionality of other immunity cells, like dendritic cells, monocytes/macrophages and NK cells. Functionally, in infected CD4(+) T-lymphocytes, down-regulates the surface MHC-I, mature MHC-II, CD4, CD28, CCR5 and CXCR4 molecules. Mediates internalization and degradation of host CD4 through the interaction of with the cytoplasmic tail of CD4, the recruitment of AP-2 (clathrin adapter protein complex 2), internalization through clathrin coated pits, and subsequent transport to endosomes and lysosomes for degradation. Diverts host MHC-I molecules to the trans-Golgi network-associated endosomal compartments by an endocytic pathway to finally target them for degradation. MHC-I down-regulation may involve AP-1 (clathrin adapter protein complex 1) or possibly Src family kinase-ZAP70/Syk-PI3K cascade recruited by PACS2. In consequence infected cells are masked for immune recognition by cytotoxic T-lymphocytes. Decreasing the number of immune receptors also prevents reinfection by more HIV particles (superinfection). Down-regulates host SERINC3 and SERINC5 thereby excluding these proteins from the viral particles. Virion infectivity is drastically higher when SERINC3 or SERINC5 are excluded from the viral envelope, because these host antiviral proteins impair the membrane fusion event necessary for subsequent virion penetration. In terms of biological role, bypasses host T-cell signaling by inducing a transcriptional program nearly identical to that of anti-CD3 cell activation. Interaction with TCR-zeta chain up-regulates the Fas ligand (FasL). Increasing surface FasL molecules and decreasing surface MHC-I molecules on infected CD4(+) cells send attacking cytotoxic CD8+ T-lymphocytes into apoptosis. Its function is as follows. Plays a role in optimizing the host cell environment for viral replication without causing cell death by apoptosis. Protects the infected cells from apoptosis in order to keep them alive until the next virus generation is ready to strike. Inhibits the Fas and TNFR-mediated death signals by blocking MAP3K5/ASK1. Decreases the half-life of TP53, protecting the infected cell against p53-mediated apoptosis. Inhibits the apoptotic signals regulated by the Bcl-2 family proteins through the formation of a Nef/PI3-kinase/PAK2 complex that leads to activation of PAK2 and induces phosphorylation of host BAD. Extracellular Nef protein targets CD4(+) T-lymphocytes for apoptosis by interacting with CXCR4 surface receptors. This chain is Protein Nef, found in Homo sapiens (Human).